Here is a 329-residue protein sequence, read N- to C-terminus: Uroporphyrinogen decarboxylase (329 aa).

Residues 22 to 26 (RQVGR), Asp71, Tyr140, Ser195, and His307 each bind substrate.

It belongs to the uroporphyrinogen decarboxylase family. As to quaternary structure, homodimer.

The protein localises to the cytoplasm. The enzyme catalyses uroporphyrinogen III + 4 H(+) = coproporphyrinogen III + 4 CO2. The protein operates within porphyrin-containing compound metabolism; protoporphyrin-IX biosynthesis; coproporphyrinogen-III from 5-aminolevulinate: step 4/4. Functionally, catalyzes the decarboxylation of four acetate groups of uroporphyrinogen-III to yield coproporphyrinogen-III. The protein is Uroporphyrinogen decarboxylase of Chlamydia pneumoniae (Chlamydophila pneumoniae).